The sequence spans 318 residues: C1GALT1-specific chaperone 1 (318 aa).

The Cytoplasmic segment spans residues 1-6 (MLSESS). A helical; Signal-anchor for type II membrane protein transmembrane segment spans residues 7-26 (SFLKGVMLGSIFCALITMLG). Residues 27 to 318 (HIRIGHGNRM…FLPPNGSDND (292 aa)) are Lumenal-facing.

It belongs to the glycosyltransferase 31 family. Beta3-Gal-T subfamily. Associates with core 1 beta-3-galactosyltransferase (C1GALT1), probably not with the soluble active form. Ubiquitously expressed. Abundantly expressed in salivary gland, stomach, small intestine, kidney, and testis and at intermediate levels in whole brain, cerebellum, spinal cord, thymus, spleen, trachea, lung, pancreas, ovary, and uterus.

It is found in the membrane. In terms of biological role, probable chaperone required for the generation of 1 O-glycan Gal-beta1-3GalNAc-alpha1-Ser/Thr (T antigen), which is a precursor for many extended O-glycans in glycoproteins. Probably acts as a specific molecular chaperone assisting the folding/stability of core 1 beta-3-galactosyltransferase (C1GALT1). The chain is C1GALT1-specific chaperone 1 (C1GALT1C1) from Homo sapiens (Human).